Reading from the N-terminus, the 260-residue chain is tRNA pseudouridine synthase A (260 aa).

Catalysis depends on Asp-52, which acts as the Nucleophile. Tyr-111 serves as a coordination point for substrate.

This sequence belongs to the tRNA pseudouridine synthase TruA family. As to quaternary structure, homodimer.

It carries out the reaction uridine(38/39/40) in tRNA = pseudouridine(38/39/40) in tRNA. Its function is as follows. Formation of pseudouridine at positions 38, 39 and 40 in the anticodon stem and loop of transfer RNAs. This is tRNA pseudouridine synthase A from Beijerinckia indica subsp. indica (strain ATCC 9039 / DSM 1715 / NCIMB 8712).